We begin with the raw amino-acid sequence, 23 residues long: Phallacidin proprotein (23 aa).

A propeptide is located at residue Pro-1. The cyclopeptide (Ala-Pro) cross-link spans 2-8 (AWLVDCP). The 2'-cysteinyl-6'-hydroxytryptophan sulfoxide (Trp-Cys) cross-link spans 3–7 (WLVDC). A propeptide spanning residues 9-23 (CVGDDVNRLLARGEK) is cleaved from the precursor.

It belongs to the MSDIN fungal toxin family. In terms of processing, processed by the macrocyclase-peptidase enzyme POPB to yield a toxic cyclic heptapeptide. POPB first removes 10 residues from the N-terminus. Conformational trapping of the remaining peptide forces the enzyme to release this intermediate rather than proceed to macrocyclization. The enzyme rebinds the remaining peptide in a different conformation and catalyzes macrocyclization of the N-terminal 7 residues.

In terms of biological role, major toxin that belongs to the bicyclic heptapeptides called phallotoxins. Although structurally related to amatoxins, phallotoxins have a different mode of action, which is the stabilization of F-actin. Phallotoxins are poisonous when administered parenterally, but not orally because of poor absorption. The polypeptide is Phallacidin proprotein (Amanita fuliginea (East Asian brown death cap)).